Consider the following 311-residue polypeptide: Homoserine kinase (311 aa).

88-98 (PEGLGLGSSGA) contributes to the ATP binding site.

It belongs to the GHMP kinase family. Homoserine kinase subfamily.

Its subcellular location is the cytoplasm. It catalyses the reaction L-homoserine + ATP = O-phospho-L-homoserine + ADP + H(+). It functions in the pathway amino-acid biosynthesis; L-threonine biosynthesis; L-threonine from L-aspartate: step 4/5. Its function is as follows. Catalyzes the ATP-dependent phosphorylation of L-homoserine to L-homoserine phosphate. The protein is Homoserine kinase of Saccharolobus islandicus (strain Y.N.15.51 / Yellowstone #2) (Sulfolobus islandicus).